We begin with the raw amino-acid sequence, 86 residues long: Small ribosomal subunit protein eS27 (86 aa).

The C4-type zinc-finger motif lies at Cys39 to Cys61.

It belongs to the eukaryotic ribosomal protein eS27 family. Requires Zn(2+) as cofactor.

This Hordeum vulgare (Barley) protein is Small ribosomal subunit protein eS27 (RPS27).